Consider the following 228-residue polypeptide: L-ribulose-5-phosphate 4-epimerase UlaF (228 aa).

Substrate is bound by residues 26 to 27 (GN), 43 to 44 (SG), and 72 to 73 (SS). Zn(2+) contacts are provided by D74, H93, and H95. D118 functions as the Proton donor/acceptor in the catalytic mechanism. Residue H167 participates in Zn(2+) binding. The active-site Proton donor/acceptor is Y225.

It belongs to the aldolase class II family. AraD/FucA subfamily. It depends on Zn(2+) as a cofactor.

The enzyme catalyses L-ribulose 5-phosphate = D-xylulose 5-phosphate. It functions in the pathway cofactor degradation; L-ascorbate degradation; D-xylulose 5-phosphate from L-ascorbate: step 4/4. In terms of biological role, catalyzes the isomerization of L-ribulose 5-phosphate to D-xylulose 5-phosphate. Is involved in the anaerobic L-ascorbate utilization. In Escherichia coli (strain K12 / MC4100 / BW2952), this protein is L-ribulose-5-phosphate 4-epimerase UlaF.